Reading from the N-terminus, the 200-residue chain is Probable GTP-binding protein EngB (200 aa).

The EngB-type G domain maps to 25–199 (SGYEVAFAGR…ISLLDRWYEW (175 aa)). GTP is bound by residues 33 to 40 (GRSNAGKS), 60 to 64 (GRTQL), 78 to 81 (DLPG), 145 to 148 (TKAD), and 178 to 180 (FSS). Residues Ser-40 and Thr-62 each coordinate Mg(2+).

The protein belongs to the TRAFAC class TrmE-Era-EngA-EngB-Septin-like GTPase superfamily. EngB GTPase family. Mg(2+) is required as a cofactor.

Necessary for normal cell division and for the maintenance of normal septation. The sequence is that of Probable GTP-binding protein EngB from Legionella pneumophila (strain Corby).